Here is a 156-residue protein sequence, read N- to C-terminus: Protein LlR18A (156 aa).

The trans-zeatin site is built by Asn8 and Asp28. Positions 32 and 38 each coordinate Ca(2+). Residues Lys54, Asp133, and Lys136 each coordinate trans-zeatin.

It belongs to the BetVI family. As to expression, expressed constitutively in roots.

It localises to the cytoplasm. The protein localises to the cytosol. Its function is as follows. Class II ribonuclease (RNase). Binds to cytokinins. Interacts with melatonin. The chain is Protein LlR18A (LLR18A) from Lupinus luteus (European yellow lupine).